The chain runs to 124 residues: Fluoride-specific ion channel FluC (124 aa).

Helical transmembrane passes span 4–24 (ILAI…LAGG), 32–52 (AFPW…GLIM), 68–88 (GLTI…YETF), and 101–121 (LNVL…IMAA). Na(+) is bound by residues G75 and T78.

This sequence belongs to the fluoride channel Fluc/FEX (TC 1.A.43) family.

It is found in the cell inner membrane. The catalysed reaction is fluoride(in) = fluoride(out). With respect to regulation, na(+) is not transported, but it plays an essential structural role and its presence is essential for fluoride channel function. Fluoride-specific ion channel. Important for reducing fluoride concentration in the cell, thus reducing its toxicity. This is Fluoride-specific ion channel FluC from Geobacter sulfurreducens (strain ATCC 51573 / DSM 12127 / PCA).